Reading from the N-terminus, the 851-residue chain is Envelope glycoprotein gp160 (851 aa).

The N-terminal stretch at 1–24 is a signal peptide; it reads MEPGRNQLLVAILLTSACLIYCKQ. Topologically, residues 25–669 are extracellular; sequence YVTVFYGIPA…LTSWIKYIQY (645 aa). N-linked (GlcNAc...) asparagine; by host glycosylation is present at asparagine 37. Cysteine 44 and cysteine 57 form a disulfide bridge. Residues asparagine 70, asparagine 114, asparagine 127, asparagine 134, asparagine 142, asparagine 157, asparagine 184, asparagine 195, asparagine 227, asparagine 230, asparagine 261, asparagine 267, asparagine 278, asparagine 289, asparagine 299, asparagine 355, asparagine 361, asparagine 388, asparagine 398, asparagine 401, asparagine 438, asparagine 453, and asparagine 456 are each glycosylated (N-linked (GlcNAc...) asparagine; by host). Disulfide bonds link cysteine 101/cysteine 203, cysteine 108/cysteine 194, cysteine 113/cysteine 154, cysteine 216/cysteine 246, and cysteine 226/cysteine 238. Residues 113-153 form a V1 region; sequence CNITSGTTATPSPPNITIIDENSTCIGDNNCTGLGKEEVVE. The V2 stretch occupies residues 154-194; that stretch reads CEFNMTGLEQDKKRKYNDAWYSRDVVCDKTNGTGTCYMRHC. The V3 stretch occupies residues 294-327; sequence CKRPGNKTVVPITLMSGRRFHSRPVYNKKPGQAW. The cysteines at positions 294 and 328 are disulfide-linked. Cystine bridges form between cysteine 380–cysteine 437 and cysteine 387–cysteine 410. The tract at residues 387 to 410 is V4; sequence CNMTWFLNWVENKTNQTHGNYAPC. The V5 stretch occupies residues 453-459; it reads NQTNITF. A fusion peptide region spans residues 502-522; it reads GVFVLGFLGFLATAGSAMGGA. Residues 565–581 are immunosuppression; sequence LQARVTAIEKYLKDQAQ. N-linked (GlcNAc...) asparagine; by host glycosylation is found at asparagine 601, asparagine 610, and asparagine 626. The segment at 647 to 668 is MPER; binding to GalCer; the sequence is KLNSWDVFGNWFDLTSWIKYIQ. The chain crosses the membrane as a helical span at residues 670 to 690; sequence GVYIVVGIIGLRIAIYIVQLL. Over 691–851 the chain is Cytoplasmic; that stretch reads SRLRKGYRPV…IRQGAEIALL (161 aa). Residues 697-700 carry the YXXV motif; contains endocytosis signal motif; it reads YRPV. A lipid anchor (S-palmitoyl cysteine; by host) is attached at cysteine 763. The short motif at 850 to 851 is the Di-leucine internalization motif element; sequence LL.

In terms of assembly, the mature envelope protein (Env) consists of a homotrimer of non-covalently associated gp120-gp41 heterodimers. The resulting complex protrudes from the virus surface as a spike. There seems to be as few as 10 spikes on the average virion. Interacts with human CD4, CCR5 and CXCR4, to form a P4HB/PDI-CD4-CXCR4-gp120 complex. Gp120 also interacts with the C-type lectins CD209/DC-SIGN and CLEC4M/DC-SIGNR (collectively referred to as DC-SIGN(R)). Gp120 and gp41 interact with GalCer. As to quaternary structure, the mature envelope protein (Env) consists of a homotrimer of non-covalently associated gp120-gp41 heterodimers. The resulting complex protrudes from the virus surface as a spike. There seems to be as few as 10 spikes on the average virion. Specific enzymatic cleavages in vivo yield mature proteins. Envelope glycoproteins are synthesized as an inactive precursor that is heavily N-glycosylated and processed likely by host cell furin in the Golgi to yield the mature SU and TM proteins. The cleavage site between SU and TM requires the minimal sequence [KR]-X-[KR]-R. In terms of processing, palmitoylation of the transmembrane protein and of Env polyprotein (prior to its proteolytic cleavage) is essential for their association with host cell membrane lipid rafts. Palmitoylation is therefore required for envelope trafficking to classical lipid rafts, but not for viral replication.

It localises to the virion membrane. The protein localises to the host cell membrane. Its subcellular location is the host endosome membrane. Its function is as follows. The surface protein gp120 (SU) attaches the virus to the host lymphoid cell by binding to the primary receptor CD4. This interaction induces a structural rearrangement creating a high affinity binding site for a chemokine coreceptor like CXCR4 and/or CCR5. This peculiar 2 stage receptor-interaction strategy allows gp120 to maintain the highly conserved coreceptor-binding site in a cryptic conformation, protected from neutralizing antibodies. Since CD4 also displays a binding site for the disulfide-isomerase P4HB/PDI, a P4HB/PDI-CD4-CXCR4-gp120 complex may form. In that complex, P4HB/PDI could reach and reduce gp120 disulfide bonds, causing major conformational changes in gp120. TXN, another PDI family member could also be involved in disulfide rearrangements in Env during fusion. These changes are transmitted to the transmembrane protein gp41 and are thought to activate its fusogenic potential by unmasking its fusion peptide. In terms of biological role, the surface protein gp120 is a ligand for CD209/DC-SIGN and CLEC4M/DC-SIGNR, which are respectively found on dendritic cells (DCs), and on endothelial cells of liver sinusoids and lymph node sinuses. These interactions allow capture of viral particles at mucosal surfaces by these cells and subsequent transmission to permissive cells. DCs are professional antigen presenting cells, critical for host immunity by inducing specific immune responses against a broad variety of pathogens. They act as sentinels in various tissues where they take up antigen, process it, and present it to T-cells following migration to lymphoid organs. HIV subverts the migration properties of dendritic cells to gain access to CD4+ T-cells in lymph nodes. Virus transmission to permissive T-cells occurs either in trans (without DCs infection, through viral capture and transmission), or in cis (following DCs productive infection, through the usual CD4-gp120 interaction), thereby inducing a robust infection. In trans infection, bound virions remain infectious over days and it is proposed that they are not degraded, but protected in non-lysosomal acidic organelles within the DCs close to the cell membrane thus contributing to the viral infectious potential during DCs' migration from the periphery to the lymphoid tissues. On arrival at lymphoid tissues, intact virions recycle back to DCs' cell surface allowing virus transmission to CD4+ T-cells. Virion capture also seems to lead to MHC-II-restricted viral antigen presentation, and probably to the activation of HIV-specific CD4+ cells. Functionally, the transmembrane protein gp41 (TM) acts as a class I viral fusion protein. Under the current model, the protein has at least 3 conformational states: pre-fusion native state, pre-hairpin intermediate state, and post-fusion hairpin state. During fusion of viral and target intracellular membranes, the coiled coil regions (heptad repeats) assume a trimer-of-hairpins structure, positioning the fusion peptide in close proximity to the C-terminal region of the ectodomain. The formation of this structure appears to drive apposition and subsequent fusion of viral and target cell membranes. Complete fusion occurs in host cell endosomes and is dynamin-dependent, however some lipid transfer might occur at the plasma membrane. The virus undergoes clathrin-dependent internalization long before endosomal fusion, thus minimizing the surface exposure of conserved viral epitopes during fusion and reducing the efficacy of inhibitors targeting these epitopes. Membranes fusion leads to delivery of the nucleocapsid into the cytoplasm. The envelope glycoprotein gp160 precursor down-modulates cell surface CD4 antigen by interacting with it in the endoplasmic reticulum and blocking its transport to the cell surface. Its function is as follows. The gp120-gp41 heterodimer seems to contribute to T-cell depletion during HIV-1 infection. The envelope glycoproteins expressed on the surface of infected cells induce apoptosis through an interaction with uninfected cells expressing the receptor (CD4) and the coreceptors CXCR4 or CCR5. This type of bystander killing may be obtained by at least three distinct mechanisms. First, the interaction between the 2 cells can induce cellular fusion followed by nuclear fusion within the syncytium. Syncytia are condemned to die from apoptosis. Second, the 2 interacting cells may not fuse entirely and simply exchange plasma membrane lipids, after a sort of hemifusion process, followed by rapid death. Third, it is possible that virus-infected cells, on the point of undergoing apoptosis, fuse with CD4-expressing cells, in which case apoptosis is rapidly transmitted from one cell to the other and thus occurs in a sort of contagious fashion. In terms of biological role, the gp120-gp41 heterodimer allows rapid transcytosis of the virus through CD4 negative cells such as simple epithelial monolayers of the intestinal, rectal and endocervical epithelial barriers. Both gp120 and gp41 specifically recognize glycosphingolipids galactosyl-ceramide (GalCer) or 3' sulfo-galactosyl-ceramide (GalS) present in the lipid rafts structures of epithelial cells. Binding to these alternative receptors allows the rapid transcytosis of the virus through the epithelial cells. This transcytotic vesicle-mediated transport of virions from the apical side to the basolateral side of the epithelial cells does not involve infection of the cells themselves. This chain is Envelope glycoprotein gp160 (env), found in Human immunodeficiency virus type 2 subtype A (isolate D194) (HIV-2).